A 477-amino-acid chain; its full sequence is Ribulose bisphosphate carboxylase large chain (477 aa).

The propeptide occupies 1 to 2 (MS). Pro-3 is subject to N-acetylproline. The residue at position 14 (Lys-14) is an N6,N6,N6-trimethyllysine. Substrate-binding residues include Asn-123 and Thr-173. Lys-175 functions as the Proton acceptor in the catalytic mechanism. Residue Lys-177 participates in substrate binding. Mg(2+) contacts are provided by Lys-201, Asp-203, and Glu-204. Lys-201 carries the post-translational modification N6-carboxylysine. His-294 (proton acceptor) is an active-site residue. 3 residues coordinate substrate: Arg-295, His-327, and Ser-379.

It belongs to the RuBisCO large chain family. Type I subfamily. In terms of assembly, heterohexadecamer of 8 large chains and 8 small chains; disulfide-linked. The disulfide link is formed within the large subunit homodimers. The cofactor is Mg(2+). Post-translationally, the disulfide bond which can form in the large chain dimeric partners within the hexadecamer appears to be associated with oxidative stress and protein turnover.

Its subcellular location is the plastid. The protein resides in the chloroplast. It carries out the reaction 2 (2R)-3-phosphoglycerate + 2 H(+) = D-ribulose 1,5-bisphosphate + CO2 + H2O. The enzyme catalyses D-ribulose 1,5-bisphosphate + O2 = 2-phosphoglycolate + (2R)-3-phosphoglycerate + 2 H(+). In terms of biological role, ruBisCO catalyzes two reactions: the carboxylation of D-ribulose 1,5-bisphosphate, the primary event in carbon dioxide fixation, as well as the oxidative fragmentation of the pentose substrate in the photorespiration process. Both reactions occur simultaneously and in competition at the same active site. The protein is Ribulose bisphosphate carboxylase large chain of Nicotiana otophora (Tobacco).